A 419-amino-acid polypeptide reads, in one-letter code: L-rhamnose isomerase (419 aa).

3 residues coordinate Mn(2+): H262, D294, and D296.

Belongs to the rhamnose isomerase family. As to quaternary structure, homotetramer. Mn(2+) is required as a cofactor.

Its subcellular location is the cytoplasm. It carries out the reaction L-rhamnopyranose = L-rhamnulose. The protein operates within carbohydrate degradation; L-rhamnose degradation; glycerone phosphate from L-rhamnose: step 1/3. In terms of biological role, catalyzes the interconversion of L-rhamnose and L-rhamnulose. The polypeptide is L-rhamnose isomerase (Escherichia coli O139:H28 (strain E24377A / ETEC)).